The sequence spans 191 residues: Signal peptidase IB (191 aa).

At 1-7 the chain is on the cytoplasmic side; sequence MKKEILE. A helical membrane pass occupies residues 8 to 28; the sequence is WIISIAVAFVILFIVGKFIVT. Over 29–191 the chain is Extracellular; it reads PYTIKGESMD…HNFNPENTKN (163 aa). Active-site residues include Ser-36 and Lys-77.

The protein belongs to the peptidase S26 family.

The protein resides in the cell membrane. It catalyses the reaction Cleavage of hydrophobic, N-terminal signal or leader sequences from secreted and periplasmic proteins.. Its function is as follows. Essential for cell viability. The chain is Signal peptidase IB (spsB) from Staphylococcus aureus (strain COL).